A 301-amino-acid chain; its full sequence is Probable 2-oxoglutarate-dependent dioxygenase AOP1 (301 aa).

In terms of domain architecture, Fe2OG dioxygenase spans 158 to 262; it reads TYYLTRLMKY…RYSTGLFSIP (105 aa). Residues H186, D188, and H243 each coordinate Fe cation. A 2-oxoglutarate-binding site is contributed by R253.

This sequence belongs to the iron/ascorbate-dependent oxidoreductase family. Requires Fe(2+) as cofactor.

Probable 2-oxoglutarate-dependent dioxygenase that may be involved in glucosinolates biosynthesis. May play a role in the production of aliphatic glucosinolates. This is Probable 2-oxoglutarate-dependent dioxygenase AOP1 (AOP1) from Arabidopsis thaliana (Mouse-ear cress).